A 513-amino-acid chain; its full sequence is MRLNVNEISDIIRNRIKQLDIGCETRNEGTITSVADGVIYIHGLSNVMQGEMIALPYNKFAIALNLESSATGAIVMGSYENISEGMVVKCTGDILRVPVGPELLGRVVNALGVPIDNKGLINCSNYYPIESDAPGVIDRQSINEPIQTGYKSIDSMVPIGRGQRELIIGDRQTGKSALAIDTIINQSCSGVKCIYVAIGQKATTVVNVVKKLEEYHALDNTIVILASASESAILQYLAPYSGCAMGEYFRNNGQDALIVYDDLSKQAVAYRQLSLLLRRPPGREAYPGDIFYLHSRLLERSAKVRSEYIERCTQGKITGKTGSLTALPIIETQAGDVSAFIPTNVISITDGQIFLESQLFNAGVRPAINPGISVSRVGGSAQTKIMKVLSGGIRTALAQYRELAAFSQFSSELDNVTRKQLQHGQKVTELLKQKQYSCMSVACQAIILFAVSYGYLEDIELSKIGDFEAKLISYLTYHELELVKHINIYGSYDSNIENKLKNILEMFKLNKFS.

Gly-169 to Ser-176 serves as a coordination point for ATP.

The protein belongs to the ATPase alpha/beta chains family. F-type ATPases have 2 components, CF(1) - the catalytic core - and CF(0) - the membrane proton channel. CF(1) has five subunits: alpha(3), beta(3), gamma(1), delta(1), epsilon(1). CF(0) has three main subunits: a(1), b(2) and c(9-12). The alpha and beta chains form an alternating ring which encloses part of the gamma chain. CF(1) is attached to CF(0) by a central stalk formed by the gamma and epsilon chains, while a peripheral stalk is formed by the delta and b chains.

The protein resides in the cell inner membrane. It catalyses the reaction ATP + H2O + 4 H(+)(in) = ADP + phosphate + 5 H(+)(out). Its function is as follows. Produces ATP from ADP in the presence of a proton gradient across the membrane. The alpha chain is a regulatory subunit. This Blochmanniella floridana protein is ATP synthase subunit alpha.